Consider the following 202-residue polypeptide: ATP-dependent Clp protease proteolytic subunit 1 (202 aa).

S99 serves as the catalytic Nucleophile. H123 is an active-site residue.

It belongs to the peptidase S14 family. In terms of assembly, fourteen ClpP subunits assemble into 2 heptameric rings which stack back to back to give a disk-like structure with a central cavity, resembling the structure of eukaryotic proteasomes.

It is found in the cytoplasm. It catalyses the reaction Hydrolysis of proteins to small peptides in the presence of ATP and magnesium. alpha-casein is the usual test substrate. In the absence of ATP, only oligopeptides shorter than five residues are hydrolyzed (such as succinyl-Leu-Tyr-|-NHMec, and Leu-Tyr-Leu-|-Tyr-Trp, in which cleavage of the -Tyr-|-Leu- and -Tyr-|-Trp bonds also occurs).. In terms of biological role, cleaves peptides in various proteins in a process that requires ATP hydrolysis. Has a chymotrypsin-like activity. Plays a major role in the degradation of misfolded proteins. In Symbiobacterium thermophilum (strain DSM 24528 / JCM 14929 / IAM 14863 / T), this protein is ATP-dependent Clp protease proteolytic subunit 1.